A 365-amino-acid chain; its full sequence is Delta(7)-sterol 5(6)-desaturase ERG3 (365 aa).

The Cytoplasmic portion of the chain corresponds to 1-92 (MDLVLEVADH…LLPRSSILRE (92 aa)). The chain crosses the membrane as a helical span at residues 93 to 113 (FLSLWVIVTIFGLLLYLFTAS). The Lumenal segment spans residues 114–140 (LSYVFVFDKSIFNHPRYLKNQMAMEIK). Residues 141–161 (LAVSAIPWMSMLTVPWFVMEL) traverse the membrane as a helical segment. Topologically, residues 162 to 242 (NGHSKLYMKI…VDGFLQSISY (81 aa)) are cytoplasmic. The Fatty acid hydroxylase domain maps to 187 to 311 (TFIFFTDCGV…FTTLWDRLGG (125 aa)). The Histidine box-1 signature appears at 200–204 (HRWLH). The Histidine box-2 motif lies at 213–217 (HKPHH). A helical transmembrane segment spans residues 243-263 (HIYPLILPLHKVSYLILFTFV). The Lumenal portion of the chain corresponds to 264-365 (NFWTVMIHDG…ENDPNTKKNN (102 aa)). A Histidine box-3 motif is present at residues 288 to 292 (HTVHH). Residues Lys-324 and Lys-344 each participate in a glycyl lysine isopeptide (Lys-Gly) (interchain with G-Cter in ubiquitin) cross-link.

This sequence belongs to the sterol desaturase family. Interacts with ERG28. Fe cation is required as a cofactor.

It localises to the endoplasmic reticulum membrane. The catalysed reaction is episterol + 2 Fe(II)-[cytochrome b5] + O2 + 2 H(+) = 5-dehydroepisterol + 2 Fe(III)-[cytochrome b5] + 2 H2O. It functions in the pathway steroid metabolism; ergosterol biosynthesis; ergosterol from zymosterol: step 3/5. In terms of biological role, C-5 sterol desaturase; part of the third module of ergosterol biosynthesis pathway that includes the late steps of the pathway. ERG3 catalyzes the introduction of a C-5 double bond in the B ring to produce 5-dehydroepisterol. The third module or late pathway involves the ergosterol synthesis itself through consecutive reactions that mainly occur in the endoplasmic reticulum (ER) membrane. Firstly, the squalene synthase ERG9 catalyzes the condensation of 2 farnesyl pyrophosphate moieties to form squalene, which is the precursor of all steroids. Squalene synthase is crucial for balancing the incorporation of farnesyl diphosphate (FPP) into sterol and nonsterol isoprene synthesis. Secondly, the squalene epoxidase ERG1 catalyzes the stereospecific oxidation of squalene to (S)-2,3-epoxysqualene, which is considered to be a rate-limiting enzyme in steroid biosynthesis. Then, the lanosterol synthase ERG7 catalyzes the cyclization of (S)-2,3 oxidosqualene to lanosterol, a reaction that forms the sterol core. In the next steps, lanosterol is transformed to zymosterol through a complex process involving various demethylation, reduction and desaturation reactions. The lanosterol 14-alpha-demethylase ERG11 (also known as CYP51) catalyzes C14-demethylation of lanosterol to produce 4,4'-dimethyl cholesta-8,14,24-triene-3-beta-ol, which is critical for ergosterol biosynthesis. The C-14 reductase ERG24 reduces the C14=C15 double bond of 4,4-dimethyl-cholesta-8,14,24-trienol to produce 4,4-dimethyl-cholesta-8,24-dienol. 4,4-dimethyl-cholesta-8,24-dienol is substrate of the C-4 demethylation complex ERG25-ERG26-ERG27 in which ERG25 catalyzes the three-step monooxygenation required for the demethylation of 4,4-dimethyl and 4alpha-methylsterols, ERG26 catalyzes the oxidative decarboxylation that results in a reduction of the 3-beta-hydroxy group at the C-3 carbon to an oxo group, and ERG27 is responsible for the reduction of the keto group on the C-3. ERG28 has a role as a scaffold to help anchor ERG25, ERG26 and ERG27 to the endoplasmic reticulum and ERG29 regulates the activity of the iron-containing C4-methylsterol oxidase ERG25. Then, the sterol 24-C-methyltransferase ERG6 catalyzes the methyl transfer from S-adenosyl-methionine to the C-24 of zymosterol to form fecosterol. The C-8 sterol isomerase ERG2 catalyzes the reaction which results in unsaturation at C-7 in the B ring of sterols and thus converts fecosterol to episterol. The sterol-C5-desaturase ERG3 then catalyzes the introduction of a C-5 double bond in the B ring to produce 5-dehydroepisterol. The C-22 sterol desaturase ERG5 further converts 5-dehydroepisterol into ergosta-5,7,22,24(28)-tetraen-3beta-ol by forming the C-22(23) double bond in the sterol side chain. Finally, ergosta-5,7,22,24(28)-tetraen-3beta-ol is substrate of the C-24(28) sterol reductase ERG4 to produce ergosterol. This chain is Delta(7)-sterol 5(6)-desaturase ERG3, found in Saccharomyces cerevisiae (strain ATCC 204508 / S288c) (Baker's yeast).